Here is a 73-residue protein sequence, read N- to C-terminus: uncharacterized protein (73 aa).

The interval 1 to 32 (MFLSSAVRKDSNGVRHLPSVQRWTPGSPPTRA) is disordered.

This is an uncharacterized protein from Frog virus 3 (isolate Goorha) (FV-3).